A 1183-amino-acid chain; its full sequence is DNA-directed RNA polymerase subunit beta (1183 aa).

It belongs to the RNA polymerase beta chain family. In terms of assembly, the RNAP catalytic core consists of 2 alpha, 1 beta, 1 beta' and 1 omega subunit. When a sigma factor is associated with the core the holoenzyme is formed, which can initiate transcription.

The catalysed reaction is RNA(n) + a ribonucleoside 5'-triphosphate = RNA(n+1) + diphosphate. DNA-dependent RNA polymerase catalyzes the transcription of DNA into RNA using the four ribonucleoside triphosphates as substrates. The chain is DNA-directed RNA polymerase subunit beta from Staphylococcus aureus (strain MRSA252).